Here is a 176-residue protein sequence, read N- to C-terminus: Conidiation-specific protein 8 (176 aa).

2 disordered regions span residues 1-66 (MDDT…SKLI) and 79-162 (AASE…PQGF). Residues 79–99 (AASEAFRSERSASTSSTTSET) show a composition bias toward low complexity.

The chain is Conidiation-specific protein 8 (con-8) from Neurospora crassa (strain ATCC 24698 / 74-OR23-1A / CBS 708.71 / DSM 1257 / FGSC 987).